Here is a 706-residue protein sequence, read N- to C-terminus: Probable N(6)-adenosine-methyltransferase MT-A70-like (706 aa).

2 disordered regions span residues 64–114 (RPFV…VAAA) and 223–261 (TLPL…PDMW). Low complexity predominate over residues 103 to 114 (SPGSSPASVAAA). Residues 227–236 (LQPPPAPQMP) are compositionally biased toward pro residues. S-adenosyl-L-methionine contacts are provided by residues 479-480 (DI) and aspartate 497. The positively charged region required for RNA-binding stretch occupies residues 567–580 (RIIRTGRTGHWLNH). Residues lysine 614, 637-640 (RMHN), and 650-651 (NQ) each bind S-adenosyl-L-methionine. The disordered stretch occupies residues 669–706 (AYPDSEVQPPSPPRASAPIDGDQGTSQKPTVSDGERPA).

The protein belongs to the MT-A70-like family.

It is found in the nucleus. The enzyme catalyses an adenosine in mRNA + S-adenosyl-L-methionine = an N(6)-methyladenosine in mRNA + S-adenosyl-L-homocysteine + H(+). In terms of biological role, probable N6-methyltransferase that methylates adenosine residues of some mRNAs. N6-methyladenosine (m6A), which is present at internal sites of some mRNAs, may play a role in the efficiency of mRNA splicing, transport or translation. In Oryza sativa subsp. japonica (Rice), this protein is Probable N(6)-adenosine-methyltransferase MT-A70-like.